The following is an 85-amino-acid chain: CDC42 small effector protein homolog (85 aa).

Residues Cys-14 and Cys-15 are each lipidated (S-palmitoyl cysteine). The region spanning 37–50 is the CRIB domain; that stretch reads IGNPTNFVHTGHIG. Residues Ser-78 and Ser-81 each carry the phosphoserine modification.

The protein belongs to the CDC42SE/SPEC family.

Its subcellular location is the cytoplasm. It localises to the cytoskeleton. It is found in the cell membrane. Probably involved in the organization of the actin cytoskeleton by acting downstream of CDC42, inducing actin filament assembly. The protein is CDC42 small effector protein homolog (Spec2) of Drosophila melanogaster (Fruit fly).